Reading from the N-terminus, the 397-residue chain is Cysteine desulfurase (397 aa).

Pyridoxal 5'-phosphate contacts are provided by residues Asn-148, Gln-176, and 196–198 (SAH). Lys-199 carries the post-translational modification N6-(pyridoxal phosphate)lysine. Position 234 (Thr-234) interacts with pyridoxal 5'-phosphate. Cys-321 functions as the Cysteine persulfide intermediate in the catalytic mechanism. Cys-321 contacts [2Fe-2S] cluster.

Belongs to the class-V pyridoxal-phosphate-dependent aminotransferase family. NifS/IscS subfamily. Homodimer. It depends on pyridoxal 5'-phosphate as a cofactor.

It catalyses the reaction (sulfur carrier)-H + L-cysteine = (sulfur carrier)-SH + L-alanine. In terms of biological role, catalyzes the removal of elemental sulfur atoms from cysteine to produce alanine. Seems to participate in the biosynthesis of the nitrogenase metalloclusters by providing the inorganic sulfur required for the Fe-S core formation. This Klebsiella pneumoniae protein is Cysteine desulfurase.